We begin with the raw amino-acid sequence, 184 residues long: Dual specificity protein phosphatase 22 (184 aa).

Residue Gly-2 is the site of N-myristoyl glycine attachment. A Tyrosine-protein phosphatase domain is found at Gly-4 to His-144. Cys-88 (phosphocysteine intermediate) is an active-site residue. The a protein site is built by Leu-89, Ala-90, Val-92, Ser-93, and Arg-94.

The protein belongs to the protein-tyrosine phosphatase family. Non-receptor class dual specificity subfamily. Monomer. Interacts with LCK; the interaction is direct. Interacts with UBR2; the interaction is direct. Post-translationally, myristoylation regulates subcellular location, and is necessary for activation of JNK.

The protein resides in the cytoplasm. It carries out the reaction O-phospho-L-tyrosyl-[protein] + H2O = L-tyrosyl-[protein] + phosphate. The enzyme catalyses O-phospho-L-seryl-[protein] + H2O = L-seryl-[protein] + phosphate. The catalysed reaction is O-phospho-L-threonyl-[protein] + H2O = L-threonyl-[protein] + phosphate. In terms of biological role, dual specificity phosphatase; can dephosphorylate both phosphotyrosine and phosphoserine or phosphothreonine residues. Activates the JNK signaling pathway. Inhibits T-cell receptor signaling and T-cell mediated immune responses, acting, at least in part, by inducing degradation of E3 ubiquitin ligase UBR2. Dephosphorylates and thereby induces 'Lys-48'-linked ubiquitination of UBR2, leading to proteasomal degradation of UBR2. Dephosphorylates and thereby inactivates tyrosine kinase LCK. Inhibits UBR2-mediated 'Lys-63'-linked ubiquitination of LCK. May play a role in B-cell receptor (BCR) signaling and B-cell function. The sequence is that of Dual specificity protein phosphatase 22 (Dusp22) from Mus musculus (Mouse).